The sequence spans 140 residues: Large ribosomal subunit protein uL14 (140 aa).

The protein belongs to the universal ribosomal protein uL14 family. As to quaternary structure, part of the 50S ribosomal subunit. Forms a cluster with proteins L3 and L24e, part of which may contact the 16S rRNA in 2 intersubunit bridges.

Its function is as follows. Binds to 23S rRNA. Forms part of two intersubunit bridges in the 70S ribosome. This Nitrosopumilus maritimus (strain SCM1) protein is Large ribosomal subunit protein uL14.